A 599-amino-acid chain; its full sequence is Elongation factor 4 (599 aa).

A tr-type G domain is found at 5-187 (SHIRNFSIIA…ALVNGIPAPV (183 aa)). Residues 17 to 22 (DHGKST) and 134 to 137 (NKMD) each bind GTP.

Belongs to the TRAFAC class translation factor GTPase superfamily. Classic translation factor GTPase family. LepA subfamily.

The protein localises to the cell inner membrane. It catalyses the reaction GTP + H2O = GDP + phosphate + H(+). Functionally, required for accurate and efficient protein synthesis under certain stress conditions. May act as a fidelity factor of the translation reaction, by catalyzing a one-codon backward translocation of tRNAs on improperly translocated ribosomes. Back-translocation proceeds from a post-translocation (POST) complex to a pre-translocation (PRE) complex, thus giving elongation factor G a second chance to translocate the tRNAs correctly. Binds to ribosomes in a GTP-dependent manner. The chain is Elongation factor 4 from Teredinibacter turnerae (strain ATCC 39867 / T7901).